Consider the following 480-residue polypeptide: tRNA (uracil-5-)-methyltransferase homolog B (480 aa).

The S-adenosyl-L-methionine site is built by Gln299, Glu349, and Asn399. The Nucleophile role is filled by Cys427. Glu473 acts as the Proton acceptor in catalysis.

It belongs to the class I-like SAM-binding methyltransferase superfamily. RNA M5U methyltransferase family.

The protein localises to the mitochondrion. The enzyme catalyses uridine(54) in tRNA + S-adenosyl-L-methionine = 5-methyluridine(54) in tRNA + S-adenosyl-L-homocysteine + H(+). It catalyses the reaction a uridine in 12S rRNA + S-adenosyl-L-methionine = a 5-methyluridine in 12S rRNA + S-adenosyl-L-homocysteine + H(+). Functionally, mitochondrial S-adenosyl-L-methionine-dependent methyltransferase that catalyzes the formation of 5-methyl-uridine in tRNAs and 12S rRNA. Catalyzes the methylation of uridine at position 54 (m5U54) in all tRNAs. Specifically methylates the uridine in position 429 of 12S rRNA (m5U429). Does not affect RNA stability or mitochondrial translation. The chain is tRNA (uracil-5-)-methyltransferase homolog B (trmt2b) from Danio rerio (Zebrafish).